A 2185-amino-acid polypeptide reads, in one-letter code: Genome polyprotein (2185 aa).

Gly2 carries N-myristoyl glycine; by host lipidation. At 2–1495 the chain is on the cytoplasmic side; the sequence is GAQVSTQKTG…HVSRAFICLQ (1494 aa). The tract at residues 568-584 is amphipathic alpha-helix; that stretch reads FFQGPVEDAITAAIGRV. Catalysis depends on for protease 2A activity residues His872 and Asp890. Zn(2+) is bound by residues Cys907 and Cys909. Catalysis depends on Cys961, which acts as the For protease 2A activity. Zn(2+) contacts are provided by Cys967 and His969. The tract at residues 1101–1173 is membrane-binding; it reads NNSWLKKFTE…EQSAPSQSDQ (73 aa). The segment at 1101-1239 is oligomerization; the sequence is NNSWLKKFTE…SPGAGKSVAT (139 aa). The segment at 1122–1126 is RNA-binding; the sequence is AVKIQ. The region spanning 1205–1361 is the SF3 helicase domain; it reads EKKMSNYIQF…SMYSQNGKIN (157 aa). The Zn(2+) site is built by Cys1369, Cys1381, and Cys1386. A C4-type; degenerate zinc finger spans residues 1369–1386; it reads CDDECCPVNFKKCCPLVC. The RNA-binding stretch occupies residues 1413–1420; that stretch reads EYNHRHSV. An oligomerization region spans residues 1424–1429; sequence LEALFQ. Residues 1496-1511 lie within the membrane without spanning it; that stretch reads ALTTFVSVAGIIYIIY. Over 1512–2185 the chain is Cytoplasmic; that stretch reads KLFAGFQGAY…TLRRKWLDSF (674 aa). Tyr1521 is modified (O-(5'-phospho-RNA)-tyrosine). Residues 1541-1719 enclose the Peptidase C3 domain; that stretch reads GPAFEFAVAM…FSAALLKHYF (179 aa). Catalysis depends on for protease 3C activity residues His1580, Glu1611, and Cys1687. The 117-residue stretch at 1950 to 2066 folds into the RdRp catalytic domain; that stretch reads GHLIAFDYSG…SYPWPIDASL (117 aa). Mg(2+) contacts are provided by Asp1956 and Asp2052.

Belongs to the picornaviruses polyprotein family. Interacts with capsid protein VP1 and capsid protein VP3 to form heterotrimeric protomers. As to quaternary structure, interacts with capsid protein VP0, and capsid protein VP3 to form heterotrimeric protomers. Five protomers subsequently associate to form pentamers which serve as building blocks for the capsid. Interacts with capsid protein VP2, capsid protein VP3 and capsid protein VP4 following cleavage of capsid protein VP0. Interacts with host CD55. Interacts with host CXADR. In terms of assembly, interacts with capsid protein VP1 and capsid protein VP3 in the mature capsid. Interacts with capsid protein VP0 and capsid protein VP1 to form heterotrimeric protomers. Five protomers subsequently associate to form pentamers which serve as building blocks for the capsid. Interacts with capsid protein VP4 in the mature capsid. Interacts with protein 2C; this interaction may be important for virion morphogenesis. As to quaternary structure, interacts with capsid protein VP1 and capsid protein VP3. In terms of assembly, homodimer. Homohexamer; forms a hexameric ring structure with 6-fold symmetry characteristic of AAA+ ATPases. Interacts (via N-terminus) with host RTN3 (via reticulon domain); this interaction is important for viral replication. Interacts with capsid protein VP3; this interaction may be important for virion morphogenesis. As to quaternary structure, interacts with protein 3CD. In terms of assembly, homodimer. Interacts with host GBF1. Interacts (via GOLD domain) with host ACBD3 (via GOLD domain); this interaction allows the formation of a viral protein 3A/ACBD3 heterotetramer with a 2:2 stoichiometry, which will stimulate the recruitment of host PI4KB in order to synthesize PI4P at the viral RNA replication sites. Interacts with RNA-directed RNA polymerase. As to quaternary structure, interacts with host TICAM1 (via C-terminus). In terms of assembly, interacts with protein 3AB and with RNA-directed RNA polymerase. Interacts with Viral protein genome-linked and with protein 3CD. The cofactor is Mg(2+). In terms of processing, specific enzymatic cleavages in vivo by the viral proteases yield processing intermediates and the mature proteins. Post-translationally, myristoylation is required for the formation of pentamers during virus assembly. Further assembly of 12 pentamers and a molecule of genomic RNA generates the provirion. During virion maturation, immature virions are rendered infectious following cleavage of VP0 into VP4 and VP2. This maturation seems to be an autocatalytic event triggered by the presence of RNA in the capsid and it is followed by a conformational change infectious virion. In terms of processing, myristoylation is required during RNA encapsidation and formation of the mature virus particle. Post-translationally, VPg is uridylylated by the polymerase into VPg-pUpU. This acts as a nucleotide-peptide primer for the genomic RNA replication.

Its subcellular location is the virion. The protein localises to the host cytoplasm. The protein resides in the host cytoplasmic vesicle membrane. It is found in the host nucleus. It catalyses the reaction a ribonucleoside 5'-triphosphate + H2O = a ribonucleoside 5'-diphosphate + phosphate + H(+). The enzyme catalyses Selective cleavage of Tyr-|-Gly bond in the picornavirus polyprotein.. It carries out the reaction RNA(n) + a ribonucleoside 5'-triphosphate = RNA(n+1) + diphosphate. The catalysed reaction is Selective cleavage of Gln-|-Gly bond in the poliovirus polyprotein. In other picornavirus reactions Glu may be substituted for Gln, and Ser or Thr for Gly.. With respect to regulation, replication or transcription is subject to high level of random mutations by the nucleotide analog ribavirin. Forms an icosahedral capsid of pseudo T=3 symmetry with capsid proteins VP2 and VP3. The capsid is 300 Angstroms in diameter, composed of 60 copies of each capsid protein and enclosing the viral positive strand RNA genome. Capsid protein VP1 mainly forms the vertices of the capsid. Capsid protein VP1 interacts with host CD55 and CXADR to provide virion attachment to target host cells. This attachment induces virion internalization. Tyrosine kinases are probably involved in the entry process. After binding to its receptor, the capsid undergoes conformational changes. Capsid protein VP1 N-terminus (that contains an amphipathic alpha-helix) and capsid protein VP4 are externalized. Together, they shape a pore in the host membrane through which viral genome is translocated to host cell cytoplasm. Functionally, forms an icosahedral capsid of pseudo T=3 symmetry with capsid proteins VP2 and VP3. The capsid is 300 Angstroms in diameter, composed of 60 copies of each capsid protein and enclosing the viral positive strand RNA genome. In terms of biological role, lies on the inner surface of the capsid shell. After binding to the host receptor, the capsid undergoes conformational changes. Capsid protein VP4 is released, Capsid protein VP1 N-terminus is externalized, and together, they shape a pore in the host membrane through which the viral genome is translocated into the host cell cytoplasm. Its function is as follows. Component of immature procapsids, which is cleaved into capsid proteins VP4 and VP2 after maturation. Allows the capsid to remain inactive before the maturation step. Cysteine protease that cleaves viral polyprotein and specific host proteins. It is responsible for the autocatalytic cleavage between the P1 and P2 regions, which is the first cleavage occurring in the polyprotein. Also cleaves the host translation initiation factor EIF4G1, in order to shut down the capped cellular mRNA translation. Inhibits the host nucleus-cytoplasm protein and RNA trafficking by cleaving host members of the nuclear pores. Counteracts stress granule formation probably by antagonizing its assembly or promoting its dissassembly. Cleaves and inhibits host IFIH1/MDA5, thereby inhibiting the type-I IFN production and the establishment of the antiviral state. Cleaves and inhibits host MAVS, thereby inhibiting the type-I IFN production and the establishment of the antiviral state. Functionally, plays an essential role in the virus replication cycle by acting as a viroporin. Creates a pore in the host endoplasmic reticulum and as a consequence releases Ca2+ in the cytoplasm of infected cell. In turn, high levels of cytoplasmic calcium may trigger membrane trafficking and transport of viral ER-associated proteins to viroplasms, sites of viral genome replication. In terms of biological role, induces and associates with structural rearrangements of intracellular membranes. Displays RNA-binding, nucleotide binding and NTPase activities. May play a role in virion morphogenesis and viral RNA encapsidation by interacting with the capsid protein VP3. Its function is as follows. Localizes the viral replication complex to the surface of membranous vesicles. Together with protein 3CD binds the Cis-Active RNA Element (CRE) which is involved in RNA synthesis initiation. Acts as a cofactor to stimulate the activity of 3D polymerase, maybe through a nucleid acid chaperone activity. Localizes the viral replication complex to the surface of membranous vesicles. It inhibits host cell endoplasmic reticulum-to-Golgi apparatus transport and causes the disassembly of the Golgi complex, possibly through GBF1 interaction. This would result in depletion of MHC, trail receptors and IFN receptors at the host cell surface. Plays an essential role in viral RNA replication by recruiting ACBD3 and PI4KB at the viral replication sites, thereby allowing the formation of the rearranged membranous structures where viral replication takes place. Functionally, acts as a primer for viral RNA replication and remains covalently bound to viral genomic RNA. VPg is uridylylated prior to priming replication into VPg-pUpU. The oriI viral genomic sequence may act as a template for this. The VPg-pUpU is then used as primer on the genomic RNA poly(A) by the RNA-dependent RNA polymerase to replicate the viral genome. During genome replication, the VPg-RNA linkage is removed by the host TDP2, thereby accelerating replication. During the late stage of the replication cycle, host TDP2 is excluded from sites of viral RNA synthesis and encapsidation, allowing for the generation of progeny virions. In terms of biological role, involved in the viral replication complex and viral polypeptide maturation. It exhibits protease activity with a specificity and catalytic efficiency that is different from protease 3C. Protein 3CD lacks polymerase activity. Protein 3CD binds to the 5'UTR of the viral genome. Its function is as follows. Major viral protease that mediates proteolytic processing of the polyprotein. Cleaves host EIF5B, contributing to host translation shutoff. Cleaves also host PABPC1, contributing to host translation shutoff. Cleaves and inhibits host RIGI, thereby inhibiting the type-I IFN production and the establishment of the antiviral state. Cleaves and inhibits host MAVS, thereby inhibiting the type-I IFN production and the establishment of the antiviral state. Cleaves and inhibits host TICAM1/TRIF, thereby inhibiting the type-I IFN production. Cleaves host NLRP1, triggers host N-glycine-mediated degradation of the autoinhibitory NLRP1 N-terminal fragment. Cleaves host transcription factor TFEB, thereby disrupting host lysosomal functions and enhancing viral infection. Replicates the viral genomic RNA on the surface of intracellular membranes. May form linear arrays of subunits that propagate along a strong head-to-tail interaction called interface-I. Covalently attaches UMP to a tyrosine of VPg, which is used to prime RNA synthesis. The positive stranded RNA genome is first replicated at virus induced membranous vesicles, creating a dsRNA genomic replication form. This dsRNA is then used as template to synthesize positive stranded RNA genomes. ss(+)RNA genomes are either translated, replicated or encapsidated. The chain is Genome polyprotein from Coxsackievirus B3 (strain Nancy).